The following is a 244-amino-acid chain: Sperm-egg fusion protein Juno (244 aa).

Positions 1–19 are cleaved as a signal peptide; it reads MAQWWQILLGLWAVLPTLA. 8 disulfide bridges follow: C27–C55, C47–C95, C56–C99, C79–C166, C86–C137, C126–C200, C130–C180, and C143–C160. Residues 62–81 are important for interaction with IZUMO1; it reads WEAHLEEPLLFNFSMMHCGL. A glycan (N-linked (GlcNAc...) asparagine) is linked at N73. N185 carries an N-linked (GlcNAc...) asparagine glycan. G222 carries GPI-anchor amidated glycine lipidation. A propeptide spanning residues 223 to 244 is cleaved from the precursor; that stretch reads SALAPQLSYTLPAFSLCLLFHP.

This sequence belongs to the folate receptor family. Monomer. Interacts with IZUMO1; the interaction is direct. IZUMO1 and IZUMO1R/JUNO form a complex with 1:1 stoichiometry. Interacts with WDR54. In terms of processing, the protein is rapidly cleaved following fertilization, being only weakly detectable in zona-intact fertilized eggs at telophase II and undetectable at the pronuclear stage. Sheding is probably required to block to polyspermy and ensuring egg fusion with a single sperm. Widely expressed with higher expression in thymus, spleen and lung. Present at the cell surface of unfertilized oocytes, while it is barely detectable 30 to 40 minutes after fertilization (at protein level).

It localises to the cell membrane. Its function is as follows. Receptor for IZUMO1 present at the cell surface of oocytes (oolemma), which is essential for species-specific gamete recognition and fertilization. The IZUMO1:IZUMO1R/JUNO interaction is a necessary adhesion event between sperm and egg that is required for fertilization but is not sufficient for cell fusion. The ligand-receptor interaction probably does not act as a membrane 'fusogen'. Does not bind folate. The protein is Sperm-egg fusion protein Juno of Mus musculus (Mouse).